The primary structure comprises 178 residues: Crossover junction endodeoxyribonuclease RuvC (178 aa).

Active-site residues include Asp-18, Glu-78, and Asp-150. The Mg(2+) site is built by Asp-18, Glu-78, and Asp-150.

The protein belongs to the RuvC family. Homodimer which binds Holliday junction (HJ) DNA. The HJ becomes 2-fold symmetrical on binding to RuvC with unstacked arms; it has a different conformation from HJ DNA in complex with RuvA. In the full resolvosome a probable DNA-RuvA(4)-RuvB(12)-RuvC(2) complex forms which resolves the HJ. It depends on Mg(2+) as a cofactor.

The protein localises to the cytoplasm. The enzyme catalyses Endonucleolytic cleavage at a junction such as a reciprocal single-stranded crossover between two homologous DNA duplexes (Holliday junction).. Its function is as follows. The RuvA-RuvB-RuvC complex processes Holliday junction (HJ) DNA during genetic recombination and DNA repair. Endonuclease that resolves HJ intermediates. Cleaves cruciform DNA by making single-stranded nicks across the HJ at symmetrical positions within the homologous arms, yielding a 5'-phosphate and a 3'-hydroxyl group; requires a central core of homology in the junction. The consensus cleavage sequence is 5'-(A/T)TT(C/G)-3'. Cleavage occurs on the 3'-side of the TT dinucleotide at the point of strand exchange. HJ branch migration catalyzed by RuvA-RuvB allows RuvC to scan DNA until it finds its consensus sequence, where it cleaves and resolves the cruciform DNA. In Granulibacter bethesdensis (strain ATCC BAA-1260 / CGDNIH1), this protein is Crossover junction endodeoxyribonuclease RuvC.